The chain runs to 323 residues: Breast cancer metastasis-suppressor 1-like protein (323 aa).

Over residues 1-17 the composition is skewed to basic and acidic residues; it reads MPVHSRGDKKETNHHDE. The disordered stretch occupies residues 1–56; that stretch reads MPVHSRGDKKETNHHDEMEVDYAENEGSSSEDEDTESSSVSEDGDSSEMDDEDCER. A compositionally biased stretch (acidic residues) spans 18–53; sequence MEVDYAENEGSSSEDEDTESSSVSEDGDSSEMDDED. 2 coiled-coil regions span residues 52 to 84 and 149 to 180; these read EDCE…KERL and EKLL…ITSE. A Phosphoserine modification is found at S197. Glycyl lysine isopeptide (Lys-Gly) (interchain with G-Cter in SUMO2) cross-links involve residues K240 and K246.

The protein belongs to the BRMS1 family. As to quaternary structure, component of the Sin3/HDAC1 corepressor complex at least composed of BRMS1, BRMS1L and ING2/ING1L. Interacts with HDAC and SIN3A.

The protein localises to the nucleus. Involved in the histone deacetylase (HDAC1)-dependent transcriptional repression activity. When overexpressed in lung cancer cell line that lacks p53/TP53 expression, inhibits cell growth. The polypeptide is Breast cancer metastasis-suppressor 1-like protein (BRMS1L) (Bos taurus (Bovine)).